The sequence spans 273 residues: Undecaprenyl-diphosphatase (273 aa).

Transmembrane regions (helical) follow at residues 4 to 24 (LILI…FLPI), 43 to 63 (KAQV…CWEY), 82 to 102 (FVLN…LFIK), 108 to 128 (LFHP…ILWA), 183 to 203 (AAEF…FYDV), 217 to 237 (MFVV…RGFI), and 253 to 273 (IGFG…WSAG).

This sequence belongs to the UppP family.

It localises to the cell inner membrane. The catalysed reaction is di-trans,octa-cis-undecaprenyl diphosphate + H2O = di-trans,octa-cis-undecaprenyl phosphate + phosphate + H(+). Functionally, catalyzes the dephosphorylation of undecaprenyl diphosphate (UPP). Confers resistance to bacitracin. The sequence is that of Undecaprenyl-diphosphatase from Nitrosomonas eutropha (strain DSM 101675 / C91 / Nm57).